Consider the following 89-residue polypeptide: HssA/B-like protein 15 (89 aa).

This sequence belongs to the hssA/B family.

This chain is HssA/B-like protein 15 (hssl15), found in Dictyostelium discoideum (Social amoeba).